Consider the following 361-residue polypeptide: Porphobilinogen deaminase (361 aa).

Position 2 is an N-acetylserine (serine 2). Serine 69 is subject to Phosphoserine. Lysine 74 is subject to N6-acetyllysine. Serine 147 carries the post-translational modification Phosphoserine. An S-(dipyrrolylmethanemethyl)cysteine modification is found at cysteine 261.

The protein belongs to the HMBS family. Monomer. Requires dipyrromethane as cofactor.

Its subcellular location is the cytoplasm. The protein resides in the cytosol. The enzyme catalyses 4 porphobilinogen + H2O = hydroxymethylbilane + 4 NH4(+). Its pathway is porphyrin-containing compound metabolism; protoporphyrin-IX biosynthesis; coproporphyrinogen-III from 5-aminolevulinate: step 2/4. Its function is as follows. As part of the heme biosynthetic pathway, catalyzes the sequential polymerization of four molecules of porphobilinogen to form hydroxymethylbilane, also known as preuroporphyrinogen. Catalysis begins with the assembly of the dipyrromethane cofactor by the apoenzyme from two molecules of porphobilinogen or from preuroporphyrinogen. The covalently linked cofactor acts as a primer, around which the tetrapyrrole product is assembled. In the last step of catalysis, the product, preuroporphyrinogen, is released, leaving the cofactor bound to the holodeaminase intact. This Rattus norvegicus (Rat) protein is Porphobilinogen deaminase (Hmbs).